The following is a 96-amino-acid chain: Putative pterin-4-alpha-carbinolamine dehydratase (96 aa).

The protein belongs to the pterin-4-alpha-carbinolamine dehydratase family.

The enzyme catalyses (4aS,6R)-4a-hydroxy-L-erythro-5,6,7,8-tetrahydrobiopterin = (6R)-L-erythro-6,7-dihydrobiopterin + H2O. This chain is Putative pterin-4-alpha-carbinolamine dehydratase, found in Prochlorococcus marinus (strain MIT 9312).